Here is a 385-residue protein sequence, read N- to C-terminus: Xanthosine methyltransferase 2 (385 aa).

Tyrosine 18 lines the S-adenosyl-L-homocysteine pocket. Residues asparagine 21 and asparagine 25 each coordinate xanthosine. S-adenosyl-L-homocysteine contacts are provided by cysteine 62, asparagine 67, aspartate 101, leucine 102, serine 140, phenylalanine 141, and cysteine 157. Tyrosine 158 serves as a coordination point for xanthosine. Cysteine 159 is a binding site for S-adenosyl-L-homocysteine. 2 residues coordinate xanthosine: histidine 161 and tryptophan 162. 4 residues coordinate Mg(2+): asparagine 179, aspartate 261, phenylalanine 263, and asparagine 264. Residues serine 329, tyrosine 334, and tyrosine 369 each contribute to the xanthosine site.

The protein belongs to the methyltransferase superfamily. Type-7 methyltransferase family. It depends on Mg(2+) as a cofactor. In terms of tissue distribution, expressed at low levels in young leaves but not in mature leaves. Barely detectable in fruits (grains).

It catalyses the reaction xanthosine + S-adenosyl-L-methionine = 7-methylxanthosine + S-adenosyl-L-homocysteine. Its pathway is alkaloid biosynthesis. Involved in the biosynthesis of caffeine. Specific for xanthosine and could not use xanthosine 5'-monophosphate (XMP) as substrate. Catalyzes the 7-N-methylation activity of xanthosine, but does not have 1-N- or 3-N-methylation activity. This chain is Xanthosine methyltransferase 2, found in Coffea arabica (Arabian coffee).